A 653-amino-acid polypeptide reads, in one-letter code: MTSLTGLALLLCVLASQSWAARVQKTLRIAWEKGAPNGQSREMIFTNGVFPGPELIFDEDDDVEITVHNDMNRNTTVHWHGIAQEGTPWADGVIGLSQQPIRPGESFVYRFKASPPGTHWYHSHERMTLVDGLHGAFFIRPKRDMKDLWSKISNDPKDIDAMSKAALDPKLMVLSDWSRFTSEEYWKAIEDSKLLLFCVDSILLNGHGEVYCPPQEFLVNQTQWGPQHFTFPDQNVTDKGCFPAVEEGIQGPWVNQSLPEKIPAHIQSGCVPSAGSNYTVEVDPADGWVSMNFIAAASNKQVDFSIDEHPMWIYEVDGNYVQPHKFVAAAITAGERFSVMVKLDKQPGRYTIRLPDSGATQVISGFANMVYKGAEHVSPPTKPYVTYGGLSGRPETDTESYAPYNISADYMPPWPANPPAATADEEYLLVMGRAGSSFQYTMNTNYLYPMDFKADRPLLHYPNQTVGTEDEKLVIRTKNGSWVDLILQVAVLPGDGAAFEHMMHKHGSKTWRIGNGAGVWKYKSVAEAIAAEPESFNLKDPGLRDSWLTMFSPVPAGGYWSVFRYQVTNPGPWLFHCHFELHAMGGMSIALLDGVDVWPQVPEEYAVRHHPSQGTQTLAATPNASKPWYNGMLNFMQAVLGILPGQGSEELRR.

The N-terminal stretch at 1–20 (MTSLTGLALLLCVLASQSWA) is a signal peptide. 2 consecutive Plastocyanin-like domains span residues 31–143 (WEKG…RPKR) and 173–362 (VLSD…ATQV). N-linked (GlcNAc...) asparagine glycosylation is found at N74, N220, N235, N255, N277, N405, N463, and N479. One can recognise a Plastocyanin-like 3 domain in the interval 463-594 (NQTVGTEDEK…GGMSIALLDG (132 aa)). Residues H501, H504, H506, H576, C577, H578, and H582 each coordinate Cu cation. An N-linked (GlcNAc...) asparagine glycan is attached at N623.

The protein belongs to the multicopper oxidase family.

It carries out the reaction 4 norrubrofusarin + O2 = 2 ustilaginoidin A + 2 H2O. It functions in the pathway secondary metabolite biosynthesis. Functionally, laccase; part of the gene cluster that mediates the biosynthesis of ustilaginoidins, dimeric gamma-naphthopyrones isolated from different fungal species. The first step in the biosynthesis of ustilaginoidins is the production of gamma-naphthopyrone precursor YWA1 by the non-reducing polyketide synthase ustP, via condensation of one acetyl-CoA starter unit with 6 malonyl-CoA units. YWA1 is then probably substrate of the ustZ to yield norrubrofusarin via a dehydration reaction. A key enzyme in the biosynthetic pathway is the laccase ustL, which catalyzes the oxidative dimerization of norrubrofusarin to ustilaginoidin A. It can produce the M- and P-atropisomers in varying amounts, depending on the reaction conditions. For the biosynthesis of 3-methylustilaginoid in derivatives such as chaetochromin A, a methylated derivative of YWA1 is required. The C-methylation is considered to be catalyzed by ustM, the phosphopantetheine attachment site of which indicates that it acts on the growing polyketide chain before release of the product. For the biosynthesis of chaetochromin A, it is assumed that saturation of the D2 double bond takes place before dimerization, and is probably catalyzed by an external reductase because no candidate gene was identified within the cluster. The chain is Laccase ustL from Ustilaginoidea virens (Rice false smut fungus).